A 544-amino-acid chain; its full sequence is Chaperonin GroEL (544 aa).

ATP is bound by residues 29-32 (TLGP), Lys50, 86-90 (DGTTT), Gly415, and Asp495.

Belongs to the chaperonin (HSP60) family. In terms of assembly, forms a cylinder of 14 subunits composed of two heptameric rings stacked back-to-back. Interacts with the co-chaperonin GroES.

It localises to the cytoplasm. It catalyses the reaction ATP + H2O + a folded polypeptide = ADP + phosphate + an unfolded polypeptide.. In terms of biological role, together with its co-chaperonin GroES, plays an essential role in assisting protein folding. The GroEL-GroES system forms a nano-cage that allows encapsulation of the non-native substrate proteins and provides a physical environment optimized to promote and accelerate protein folding. The protein is Chaperonin GroEL of Tannerella forsythia (Bacteroides forsythus).